The sequence spans 621 residues: DnaJ homolog subfamily C member 2 (621 aa).

Methionine 1 bears the N-acetylmethionine mark. The tract at residues 23–31 (STLCQVEPV) is epitope (recognized by CD8(+) cytotoxic T-lymphocytes). Phosphoserine is present on residues serine 47, serine 49, serine 60, and serine 63. A J domain is found at 88–161 (DHYAVLGLGH…VKRRAFNSVD (74 aa)). The tract at residues 160-250 (VDPTFDNSVP…RDERRWIEKQ (91 aa)) is ZRF1-UBD. Disordered regions lie at residues 294-315 (EKKA…QRQA) and 426-453 (KEEA…GSKN). 2 consecutive SANT domains span residues 449-511 (NGSK…KLDP) and 549-604 (TDFT…EMVK).

In terms of assembly, component of ribosome-associated complex (RAC), a heterodimer composed of Hsp70/DnaK-type chaperone HSPA14 and Hsp40/DnaJ-type chaperone DNAJC2. Interacts (via ZRF1-UBD region) with ID1. In terms of processing, phosphorylated in M (mitotic) phase. As to expression, widely expressed.

It is found in the nucleus. The protein resides in the cytoplasm. Its subcellular location is the cytosol. Acts both as a chaperone in the cytosol and as a chromatin regulator in the nucleus. When cytosolic, acts as a molecular chaperone: component of the ribosome-associated complex (RAC), a complex involved in folding or maintaining nascent polypeptides in a folding-competent state. In the RAC complex, stimulates the ATPase activity of the ribosome-associated pool of Hsp70-type chaperones HSPA14 that bind to the nascent polypeptide chain. When nuclear, mediates the switching from polycomb-repressed genes to an active state: specifically recruited at histone H2A ubiquitinated at 'Lys-119' (H2AK119ub), and promotes the displacement of the polycomb PRC1 complex from chromatin, thereby facilitating transcription activation. This is DnaJ homolog subfamily C member 2 (DNAJC2) from Homo sapiens (Human).